A 194-amino-acid polypeptide reads, in one-letter code: BCL2/adenovirus E1B 19 kDa protein-interacting protein 3 (194 aa).

The interval 1–102 is disordered; that stretch reads MSQNGAPGMQ…SQSEEDDIER (102 aa). Residues 42–55 are compositionally biased toward basic and acidic residues; sequence DMEKILLDAQHESG. Phosphoserine occurs at positions 54, 66, 86, 92, and 95. The segment covering 56 to 69 has biased composition (low complexity); sequence RSSSKSSHCDSPPR. A compositionally biased stretch (basic and acidic residues) spans 78-88; the sequence is RASETDTHSIG. Positions 100–125 match the BH3 motif; the sequence is IERRKEVESILKKNSDWIWDWSSRPE. A helical transmembrane segment spans residues 164 to 184; it reads VFLPSLLLSHLLAIGLGIYIG.

This sequence belongs to the NIP3 family. Homodimer. Binds to BCL2. Interacts with BNIP3L and ACAA2. Interacts (via BH3 domain) with SPATA18 (via coiled-coil domains). Interacts with BOK; promotes BOK oligomerization. Interacts with PPTC7; this interaction promotes BNIP3 degradation. As to quaternary structure, (Microbial infection) Interacts with adenovirus E1B 19 kDa protein. In terms of assembly, (Microbial infection) Interacts with Epstein-Barr virus BHRF1.

The protein resides in the mitochondrion. It is found in the mitochondrion outer membrane. Functionally, apoptosis-inducing protein that can overcome BCL2 suppression. May play a role in repartitioning calcium between the two major intracellular calcium stores in association with BCL2. Involved in mitochondrial quality control via its interaction with SPATA18/MIEAP: in response to mitochondrial damage, participates in mitochondrial protein catabolic process (also named MALM) leading to the degradation of damaged proteins inside mitochondria. The physical interaction of SPATA18/MIEAP, BNIP3 and BNIP3L/NIX at the mitochondrial outer membrane regulates the opening of a pore in the mitochondrial double membrane in order to mediate the translocation of lysosomal proteins from the cytoplasm to the mitochondrial matrix. Plays an important role in the calprotectin (S100A8/A9)-induced cell death pathway. The sequence is that of BCL2/adenovirus E1B 19 kDa protein-interacting protein 3 from Homo sapiens (Human).